The chain runs to 371 residues: MEAKRPEQTRVVVGMSGGVDSSVTALLLKEQGYDVIGIFMKNWDDTDENGVCTATEDYQDVVQVCNQLGIAYYAVNFEKEYWDKVFTYFLEEYKAGRTPNPDVMCNKEIKFKAFLNHALTLGADYVATGHYAQVKNVDGQYQLIRGKDPNKDQTYFLNALSQQQLSRVMFPLGHLEKKEVRAIAERAGLATAKKKDSTGICFIGKRDFKEFLSSYLPAQPGEMQTLDGEVKGTHDGLMYYTLGQRQGLGIGGSGEPWFVIGKNLEKNILYVGQGFHHPGLYSEGLRAIKVNWILRRESDEPFECTAKFRYRQPDQKVTVYPQSDGAVEVLFAEPQRAITPGQAVVFYDGDVCLGGGTIDHVLKKKEDRESA.

Residues 14 to 21 (GMSGGVDS) and methionine 40 contribute to the ATP site. Residues 100 to 102 (NPD) form an interaction with target base in tRNA region. Catalysis depends on cysteine 105, which acts as the Nucleophile. Cysteine 105 and cysteine 201 are joined by a disulfide. Glycine 129 provides a ligand contact to ATP. The tract at residues 151 to 153 (KDQ) is interaction with tRNA. Cysteine 201 (cysteine persulfide intermediate) is an active-site residue. Positions 309-310 (RY) are interaction with tRNA.

This sequence belongs to the MnmA/TRMU family.

The protein resides in the cytoplasm. It carries out the reaction S-sulfanyl-L-cysteinyl-[protein] + uridine(34) in tRNA + AH2 + ATP = 2-thiouridine(34) in tRNA + L-cysteinyl-[protein] + A + AMP + diphosphate + H(+). Its function is as follows. Catalyzes the 2-thiolation of uridine at the wobble position (U34) of tRNA, leading to the formation of s(2)U34. This chain is tRNA-specific 2-thiouridylase MnmA, found in Halalkalibacterium halodurans (strain ATCC BAA-125 / DSM 18197 / FERM 7344 / JCM 9153 / C-125) (Bacillus halodurans).